A 185-amino-acid polypeptide reads, in one-letter code: Adenine phosphoribosyltransferase (185 aa).

The protein belongs to the purine/pyrimidine phosphoribosyltransferase family. In terms of assembly, homodimer.

The protein localises to the cytoplasm. The enzyme catalyses AMP + diphosphate = 5-phospho-alpha-D-ribose 1-diphosphate + adenine. It functions in the pathway purine metabolism; AMP biosynthesis via salvage pathway; AMP from adenine: step 1/1. Its function is as follows. Catalyzes a salvage reaction resulting in the formation of AMP, that is energically less costly than de novo synthesis. The protein is Adenine phosphoribosyltransferase of Rubrobacter xylanophilus (strain DSM 9941 / JCM 11954 / NBRC 16129 / PRD-1).